Consider the following 383-residue polypeptide: Chorismate synthase (383 aa).

NADP(+) is bound by residues arginine 40 and arginine 46. Residues arginine 128 to serine 130, glycine 291, lysine 306 to threonine 310, and arginine 332 each bind FMN.

It belongs to the chorismate synthase family. Homotetramer. FMNH2 serves as cofactor.

It carries out the reaction 5-O-(1-carboxyvinyl)-3-phosphoshikimate = chorismate + phosphate. The protein operates within metabolic intermediate biosynthesis; chorismate biosynthesis; chorismate from D-erythrose 4-phosphate and phosphoenolpyruvate: step 7/7. Its function is as follows. Catalyzes the anti-1,4-elimination of the C-3 phosphate and the C-6 proR hydrogen from 5-enolpyruvylshikimate-3-phosphate (EPSP) to yield chorismate, which is the branch point compound that serves as the starting substrate for the three terminal pathways of aromatic amino acid biosynthesis. This reaction introduces a second double bond into the aromatic ring system. This is Chorismate synthase from Moorella thermoacetica (strain ATCC 39073 / JCM 9320).